A 185-amino-acid polypeptide reads, in one-letter code: Ubiquitin-conjugating enzyme E2 2 (185 aa).

The region spanning 4-150 (PSKKRLIRDF…VKATVEASWL (147 aa)) is the UBC core domain. The active-site Glycyl thioester intermediate is Cys88. Positions 149–173 (WLDDGEMPESIEEDDEAEAEAEAEA) are enriched in acidic residues. Positions 149–185 (WLDDGEMPESIEEDDEAEAEAEAEATVDRSAPQTASA) are disordered.

The protein belongs to the ubiquitin-conjugating enzyme family.

The protein resides in the cytoplasm. The protein localises to the nucleus. It catalyses the reaction S-ubiquitinyl-[E1 ubiquitin-activating enzyme]-L-cysteine + [E2 ubiquitin-conjugating enzyme]-L-cysteine = [E1 ubiquitin-activating enzyme]-L-cysteine + S-ubiquitinyl-[E2 ubiquitin-conjugating enzyme]-L-cysteine.. The protein operates within protein modification; protein ubiquitination. Functionally, catalyzes the covalent attachment of ubiquitin to other proteins. Plays a role in transcription regulation by catalyzing the monoubiquitination of histone H2B to form H2BK123ub1. H2BK123ub1 gives a specific tag for epigenetic transcriptional activation and is also a prerequisite for H3K4me and H3K79me formation. Also involved in postreplication repair of UV-damaged DNA, in N-end rule-dependent protein degradation and in sporulation. This Mycosarcoma maydis (Corn smut fungus) protein is Ubiquitin-conjugating enzyme E2 2 (UBC2).